The primary structure comprises 148 residues: MSHGFTKEEVAEFQAAFNRFDKNKDGHISVEELGDVMKQLGKNLPEKDLKALISKLDTDGDGKISFEEFLTAIEKYKKGHRAGELRAVFNVLDQNGDGYITVDELKESLSKLGESLSQEELEDMIRVADVDQDGKVKYEEFVRLHVEN.

EF-hand domains follow at residues 8–43 (EEVAEFQAAFNRFDKNKDGHISVEELGDVMKQLGKN), 44–79 (LPEKDLKALISKLDTDGDGKISFEEFLTAIEKYKKG), 80–115 (HRAGELRAVFNVLDQNGDGYITVDELKESLSKLGES), and 116–148 (LSQEELEDMIRVADVDQDGKVKYEEFVRLHVEN). Ca(2+) is bound by residues D21, N23, D25, H27, E32, D57, D59, D61, K63, E68, D93, N95, D97, Y99, and E104.

Functionally, implicated in the early stage of ectopic ossification. The protein is Calmodulin-4 (Calm4) of Mus musculus (Mouse).